A 230-amino-acid polypeptide reads, in one-letter code: Ion-translocating oxidoreductase complex subunit E (230 aa).

6 helical membrane-spanning segments follow: residues 18–38, 39–59, 63–83, 86–106, 128–148, and 182–202; these read ALVQ…ATNA, LGLG…ISTL, TPTE…VSAV, LINA…PLIV, ALDG…LGAM, and PFLL…MLAG.

It belongs to the NqrDE/RnfAE family. In terms of assembly, the complex is composed of six subunits: RsxA, RsxB, RsxC, RsxD, RsxE and RsxG.

The protein resides in the cell inner membrane. Its function is as follows. Part of a membrane-bound complex that couples electron transfer with translocation of ions across the membrane. Required to maintain the reduced state of SoxR. In Escherichia fergusonii (strain ATCC 35469 / DSM 13698 / CCUG 18766 / IAM 14443 / JCM 21226 / LMG 7866 / NBRC 102419 / NCTC 12128 / CDC 0568-73), this protein is Ion-translocating oxidoreductase complex subunit E.